A 123-amino-acid chain; its full sequence is Methanesulfonate monooxygenase ferredoxin subunit (123 aa).

Residues 4 to 99 (TYLCDAADVA…LKEEDGKLLA (96 aa)) form the Rieske domain. [2Fe-2S] cluster is bound by residues Cys-43, His-45, Cys-63, and His-66.

This sequence belongs to the bacterial ring-hydroxylating dioxygenase ferredoxin component family. The MSA monooxygenase system consists of 4 proteins: the 2 subunits of the hydroxylase component (MsmA and MsmB), a ferredoxin (MsmC) and a ferredoxin reductase (MsmD). The ferredoxin component is dimeric. The cofactor is [2Fe-2S] cluster.

The protein resides in the cytoplasm. It carries out the reaction methanesulfonate + NADH + O2 = sulfite + formaldehyde + NAD(+) + H2O. Its activity is regulated as follows. MSAMO is inhibited by metal chelators (such as bathophenanthroline, bathocuprione, neocuprione, alpha-alpha-dipyridil and sodium EDTA) and by sodium azide, sodium arsenate and potassium cyanide. Functionally, methanesulfonate monooxygenase (MSAMO) mediates the primary degradation of methanesulfonic acid (MSA) to produce formaldehyd and inorganic sulfite by initial hydroxylation of the carbon atom prior to spontaneous cleavage of the unstable hydroxymethanesulfonic acid. MSAMO has a restricted substrate range that includes only the short-chain aliphatic sulfonates (methane- to butanesulfonate) and excludes all larger molecules, such as arylsulfonates and aromatic sulfonates. All MSAMO components are required for enzyme activity. The polypeptide is Methanesulfonate monooxygenase ferredoxin subunit (Methylosulfonomonas methylovora).